The following is a 578-amino-acid chain: MKDTIRQLIQQALTQLVNEGVLPEGLTPAIQVENTRDKTHGDFASNIAMMLSKPAGMKPRDLAEKIIAALPVDDSVTKAEIAGPGFINFFQNTQALAGRLDAALADARVGVRKAGPAQRTVVDLSAPNLAKEMHVGHLRSTIIGDGVARVLEFLGDEVVRQNHVGDWGTQFGMLMAYLQENPITSDELSDLENFYRAAKKRFDESEAFADRARGLVVKLQAGDAECLALWTKFKDISLSHCQKIYELLNVKLTMADVMGESAYNDDLINVVNDLKAAGMLVESNGAQCVFLDEFKNADGEPLPVIIVKADGGYLYATTDLAAVRYRSGTLKADRALYFVDQRQALHFQQVFAVARKAGFVTHPMDMEHMGFGTMNGADGRPFKTRDGGTVKLIDLLTEAQERAYTLVKEKNPELAEADLRNIARVVGIGAVKYADLSKHRTSDYSFNFDLMLNFEGNTAPYLLYAYTRVAGVFRKLGKDFSEVEGQIDLQASHEQELAAKLAQFGEVLNSVGEKGTPHILCTYLYEVAGLFSSFYENCPILTADDEAQKQSRLRLAALAGRTLKQGLELLGLETLERM.

The 'HIGH' region motif lies at 127 to 137; sequence PNLAKEMHVGH.

The protein belongs to the class-I aminoacyl-tRNA synthetase family. In terms of assembly, monomer.

The protein localises to the cytoplasm. The catalysed reaction is tRNA(Arg) + L-arginine + ATP = L-arginyl-tRNA(Arg) + AMP + diphosphate. This is Arginine--tRNA ligase from Pseudomonas fluorescens (strain SBW25).